Consider the following 366-residue polypeptide: Ribosomal RNA large subunit methyltransferase M (366 aa).

S-adenosyl-L-methionine-binding positions include serine 188, 221–224 (CPGG), aspartate 240, aspartate 260, and aspartate 277. Catalysis depends on lysine 306, which acts as the Proton acceptor.

It belongs to the class I-like SAM-binding methyltransferase superfamily. RNA methyltransferase RlmE family. RlmM subfamily. As to quaternary structure, monomer.

It localises to the cytoplasm. It catalyses the reaction cytidine(2498) in 23S rRNA + S-adenosyl-L-methionine = 2'-O-methylcytidine(2498) in 23S rRNA + S-adenosyl-L-homocysteine + H(+). Functionally, catalyzes the 2'-O-methylation at nucleotide C2498 in 23S rRNA. The polypeptide is Ribosomal RNA large subunit methyltransferase M (Klebsiella pneumoniae subsp. pneumoniae (strain ATCC 700721 / MGH 78578)).